The chain runs to 220 residues: MAKNRFNQNWLHDHINDPYVKMAQREGYRARAAYKLKEIDEQDKLIRPGQVIVDLGATPGSWSQYARNKLAQGKKRDTQREGGIDGTIIALDLLPMEPIADVHFIQGDFREDDVLRQLEDVLEGRAVDLVISDMAPNLSGVASADAARIEHLCDLALEFAQNHLKPDGALLVKCFHGSGYSQIVEKFKQQFKVVAPRKPKASRDKSSETFILGRQLKQPR.

S-adenosyl-L-methionine contacts are provided by G60, W62, D92, D108, and D133. The Proton acceptor role is filled by K173. A disordered region spans residues 197–220; the sequence is RKPKASRDKSSETFILGRQLKQPR.

The protein belongs to the class I-like SAM-binding methyltransferase superfamily. RNA methyltransferase RlmE family.

It is found in the cytoplasm. It catalyses the reaction uridine(2552) in 23S rRNA + S-adenosyl-L-methionine = 2'-O-methyluridine(2552) in 23S rRNA + S-adenosyl-L-homocysteine + H(+). In terms of biological role, specifically methylates the uridine in position 2552 of 23S rRNA at the 2'-O position of the ribose in the fully assembled 50S ribosomal subunit. The protein is Ribosomal RNA large subunit methyltransferase E of Burkholderia ambifaria (strain ATCC BAA-244 / DSM 16087 / CCUG 44356 / LMG 19182 / AMMD) (Burkholderia cepacia (strain AMMD)).